The chain runs to 84 residues: RNA-binding protein Hfq (84 aa).

One can recognise a Sm domain in the interval 11–71 (DTFLNFVRKN…ISTIMPGAPI (61 aa)).

The protein belongs to the Hfq family. In terms of assembly, homohexamer.

Functionally, RNA chaperone that binds small regulatory RNA (sRNAs) and mRNAs to facilitate mRNA translational regulation in response to envelope stress, environmental stress and changes in metabolite concentrations. Also binds with high specificity to tRNAs. The polypeptide is RNA-binding protein Hfq (Beijerinckia indica subsp. indica (strain ATCC 9039 / DSM 1715 / NCIMB 8712)).